A 178-amino-acid chain; its full sequence is Ribosome maturation factor RimM (178 aa).

Positions 101–178 constitute a PRC barrel domain; that stretch reads DGEYYWYQLQ…EMQVDWDADF (78 aa).

It belongs to the RimM family. As to quaternary structure, binds ribosomal protein uS19.

The protein resides in the cytoplasm. Its function is as follows. An accessory protein needed during the final step in the assembly of 30S ribosomal subunit, possibly for assembly of the head region. Essential for efficient processing of 16S rRNA. May be needed both before and after RbfA during the maturation of 16S rRNA. It has affinity for free ribosomal 30S subunits but not for 70S ribosomes. The protein is Ribosome maturation factor RimM of Stutzerimonas stutzeri (strain A1501) (Pseudomonas stutzeri).